Reading from the N-terminus, the 748-residue chain is Cysteine--tRNA ligase, cytoplasmic (748 aa).

The tract at residues 1 to 25 (MAGSSGQQGKGRRVQPQWSPPAGTQ) is disordered. A2 is subject to N-acetylalanine. S19 is modified (phosphoserine). C55 contacts Zn(2+). G56 is an L-cysteine binding site. The 'HIGH' region motif lies at 57–67 (PTVYDASHMGH). An L-cysteine-binding site is contributed by T96. The 'KIIK' region signature appears at 101–104 (KIIK). 2 positions are modified to phosphoserine: S305 and S307. C348, H373, and E377 together coordinate Zn(2+). Position 373 (H373) interacts with L-cysteine. The short motif at 406-410 (KMSKS) is the 'KMSKS' region element. Residue K409 coordinates ATP. 2 stretches are compositionally biased toward basic and acidic residues: residues 654-679 (KRQV…EAAK) and 700-717 (KFDE…KELS). Disordered regions lie at residues 654–686 (KRQV…MKIP) and 700–721 (KFDE…KGQA). S746 carries the phosphoserine modification.

In terms of assembly, homodimer. Zn(2+) is required as a cofactor.

The protein resides in the cytoplasm. The enzyme catalyses tRNA(Cys) + L-cysteine + ATP = L-cysteinyl-tRNA(Cys) + AMP + diphosphate. Its function is as follows. Catalyzes the ATP-dependent ligation of cysteine to tRNA(Cys). This is Cysteine--tRNA ligase, cytoplasmic (CARS1) from Macaca fascicularis (Crab-eating macaque).